The chain runs to 188 residues: MAEGHGDANGATAHTAADGGHKAPFPPFQKDTFASQLVSLLIAFVALYLIVSKIALPRVGSVLDERAKRIEDDFAAAQRLKGESDDALKAYETELAQARARAQAIGAETRERLNAASEAERKSLEEKLAVKLAEAEKTIAATRETAMSNVRGIAADAAAAIVQQLSGLVPDGKALDRAVDATLKGSQA.

The tract at residues 1-23 is disordered; the sequence is MAEGHGDANGATAHTAADGGHKA. Residues 8–18 show a composition bias toward low complexity; it reads ANGATAHTAAD. A helical membrane pass occupies residues 37–57; that stretch reads LVSLLIAFVALYLIVSKIALP.

Belongs to the ATPase B chain family. F-type ATPases have 2 components, F(1) - the catalytic core - and F(0) - the membrane proton channel. F(1) has five subunits: alpha(3), beta(3), gamma(1), delta(1), epsilon(1). F(0) has three main subunits: a(1), b(2) and c(10-14). The alpha and beta chains form an alternating ring which encloses part of the gamma chain. F(1) is attached to F(0) by a central stalk formed by the gamma and epsilon chains, while a peripheral stalk is formed by the delta and b chains.

The protein localises to the cell inner membrane. Its function is as follows. F(1)F(0) ATP synthase produces ATP from ADP in the presence of a proton or sodium gradient. F-type ATPases consist of two structural domains, F(1) containing the extramembraneous catalytic core and F(0) containing the membrane proton channel, linked together by a central stalk and a peripheral stalk. During catalysis, ATP synthesis in the catalytic domain of F(1) is coupled via a rotary mechanism of the central stalk subunits to proton translocation. Component of the F(0) channel, it forms part of the peripheral stalk, linking F(1) to F(0). The b'-subunit is a diverged and duplicated form of b found in plants and photosynthetic bacteria. The polypeptide is ATP synthase subunit b 2 (atpF2) (Rhodopseudomonas palustris (strain BisB18)).